Consider the following 279-residue polypeptide: Probable nicotinate-nucleotide pyrophosphorylase [carboxylating] (279 aa).

Substrate-binding positions include arginine 90, 125 to 127, arginine 149, lysine 159, glutamate 189, aspartate 210, 238 to 240, and 259 to 261; these read TRK, SGG, and MGF.

It belongs to the NadC/ModD family. Hexamer formed by 3 homodimers.

The enzyme catalyses nicotinate beta-D-ribonucleotide + CO2 + diphosphate = quinolinate + 5-phospho-alpha-D-ribose 1-diphosphate + 2 H(+). Its pathway is cofactor biosynthesis; NAD(+) biosynthesis; nicotinate D-ribonucleotide from quinolinate: step 1/1. In terms of biological role, involved in the catabolism of quinolinic acid (QA). This Methanothermobacter thermautotrophicus (strain ATCC 29096 / DSM 1053 / JCM 10044 / NBRC 100330 / Delta H) (Methanobacterium thermoautotrophicum) protein is Probable nicotinate-nucleotide pyrophosphorylase [carboxylating] (nadC).